The following is a 337-amino-acid chain: Heat-inducible transcription repressor HrcA (337 aa).

Belongs to the HrcA family.

Its function is as follows. Negative regulator of class I heat shock genes (grpE-dnaK-dnaJ and groELS operons). Prevents heat-shock induction of these operons. In Nocardioides sp. (strain ATCC BAA-499 / JS614), this protein is Heat-inducible transcription repressor HrcA.